The sequence spans 377 residues: Probable transposase for insertion sequence element IS5377 (377 aa).

This sequence belongs to the transposase 11 family.

In Geobacillus stearothermophilus (Bacillus stearothermophilus), this protein is Probable transposase for insertion sequence element IS5377.